Reading from the N-terminus, the 380-residue chain is MAPNPRKSHPLLKMINNSLIDLPTPSNISIWWNFGSLLGICLLTQIMTGLLLATHYTADTTLAFSSVAHTCRNVQYGWLIRNLHANGASFFFICIYLHIGRGLYYGSYLYKETWNTGIILLLTLMATAFVGYVLPWGQMSFWGATVITNLFSAIPYIGQTIVEWAWGGFSVDNPTLTRFFALHFLLPFLIAGLTLIHLTFLHESGSNNPLGIISNCDKIPFHPYFSLKDILGFMLMLLPLTTLALFSPNLLGDPENFTPANPLTTPPHIKPEWYFLFAYAILRSIPNKLGGVLALAASVLILFLIPFLHKSKQRTMTFRPISQLLFWTLVANLLILTWIGSQPVEHPFIIIGQLASLTYFLILLALFPLTGALENKLLNH.

A run of 4 helical transmembrane segments spans residues 34–54 (FGSLLGICLLTQIMTGLLLAT), 78–99 (WLIRNLHANGASFFFICIYLHI), 114–134 (WNTGIILLLTLMATAFVGYVL), and 179–199 (FFALHFLLPFLIAGLTLIHLT). Positions 84 and 98 each coordinate heme b. Heme b is bound by residues His-183 and His-197. His-202 serves as a coordination point for a ubiquinone. 4 consecutive transmembrane segments (helical) span residues 227-247 (LKDILGFMLMLLPLTTLALFS), 289-309 (LGGVLALAASVLILFLIPFLH), 321-341 (ISQLLFWTLVANLLILTWIGS), and 348-368 (FIIIGQLASLTYFLILLALFP).

This sequence belongs to the cytochrome b family. The cytochrome bc1 complex contains 11 subunits: 3 respiratory subunits (MT-CYB, CYC1 and UQCRFS1), 2 core proteins (UQCRC1 and UQCRC2) and 6 low-molecular weight proteins (UQCRH/QCR6, UQCRB/QCR7, UQCRQ/QCR8, UQCR10/QCR9, UQCR11/QCR10 and a cleavage product of UQCRFS1). This cytochrome bc1 complex then forms a dimer. Requires heme b as cofactor.

It is found in the mitochondrion inner membrane. In terms of biological role, component of the ubiquinol-cytochrome c reductase complex (complex III or cytochrome b-c1 complex) that is part of the mitochondrial respiratory chain. The b-c1 complex mediates electron transfer from ubiquinol to cytochrome c. Contributes to the generation of a proton gradient across the mitochondrial membrane that is then used for ATP synthesis. This chain is Cytochrome b (MT-CYB), found in Buteo buteo (Eurasian buzzard).